The sequence spans 147 residues: Protein BUD31 homolog (147 aa).

The Nuclear localization signal motif lies at 8 to 12; that stretch reads RRVRK.

It belongs to the BUD31 (G10) family. Identified in the spliceosome C complex.

Its subcellular location is the nucleus. Involved in pre-mRNA splicing process. This is Protein BUD31 homolog from Caenorhabditis elegans.